A 120-amino-acid chain; its full sequence is MKRLLSLLTGVLVMTGLLMALIFPQSAYANVSDEKLGDRGEKVDLNNSSVRAFRQFPGMFPTIAGKIVVGGPYSSVSDASSVLDASQKSVFDKYKDNFTVTDQEIAVNEGFDRINDGQYR.

The N-terminal stretch at 1–29 (MKRLLSLLTGVLVMTGLLMALIFPQSAYA) is a signal peptide.

This sequence belongs to the PsbU family. As to quaternary structure, PSII is composed of 1 copy each of membrane proteins PsbA, PsbB, PsbC, PsbD, PsbE, PsbF, PsbH, PsbI, PsbJ, PsbK, PsbL, PsbM, PsbT, PsbX, PsbY, Psb30/Ycf12, peripheral proteins PsbO, CyanoQ (PsbQ), PsbU, PsbV and a large number of cofactors. It forms dimeric complexes.

Its subcellular location is the cellular thylakoid membrane. Its function is as follows. One of the extrinsic, lumenal subunits of photosystem II (PSII). PSII is a light-driven water plastoquinone oxidoreductase, using light energy to abstract electrons from H(2)O, generating a proton gradient subsequently used for ATP formation. The extrinsic proteins stabilize the structure of photosystem II oxygen-evolving complex (OEC), the ion environment of oxygen evolution and protect the OEC against heat-induced inactivation. The chain is Photosystem II extrinsic protein U from Prochlorococcus marinus (strain MIT 9303).